A 237-amino-acid chain; its full sequence is Putative biotin ligase (237 aa).

In terms of domain architecture, BPL/LPL catalytic spans 1 to 191; the sequence is MEIIHLSEID…KKYKKYSITI (191 aa).

Belongs to the biotin--protein ligase family.

The enzyme catalyses biotin + L-lysyl-[protein] + ATP = N(6)-biotinyl-L-lysyl-[protein] + AMP + diphosphate + H(+). The polypeptide is Putative biotin ligase (Methanocaldococcus jannaschii (strain ATCC 43067 / DSM 2661 / JAL-1 / JCM 10045 / NBRC 100440) (Methanococcus jannaschii)).